A 110-amino-acid chain; its full sequence is Integration host factor subunit alpha (110 aa).

This sequence belongs to the bacterial histone-like protein family. Heterodimer of an alpha and a beta chain.

Functionally, this protein is one of the two subunits of integration host factor, a specific DNA-binding protein that functions in genetic recombination as well as in transcriptional and translational control. The sequence is that of Integration host factor subunit alpha from Nitrobacter hamburgensis (strain DSM 10229 / NCIMB 13809 / X14).